A 192-amino-acid chain; its full sequence is Phosphoheptose isomerase (192 aa).

In terms of domain architecture, SIS spans 37 to 192 (ITDSFKNGGK…MMLIEFEMAK (156 aa)). Substrate is bound at residue 52–54 (NGG). Zn(2+)-binding residues include His61 and Glu65. Substrate is bound by residues Glu65, 93–94 (ND), 119–121 (STS), Ser124, and Gln172. Gln172 and His180 together coordinate Zn(2+).

Belongs to the SIS family. GmhA subfamily. Homotetramer. Zn(2+) serves as cofactor.

Its subcellular location is the cytoplasm. It carries out the reaction 2 D-sedoheptulose 7-phosphate = D-glycero-alpha-D-manno-heptose 7-phosphate + D-glycero-beta-D-manno-heptose 7-phosphate. It participates in carbohydrate biosynthesis; D-glycero-D-manno-heptose 7-phosphate biosynthesis; D-glycero-alpha-D-manno-heptose 7-phosphate and D-glycero-beta-D-manno-heptose 7-phosphate from sedoheptulose 7-phosphate: step 1/1. Functionally, catalyzes the isomerization of sedoheptulose 7-phosphate in D-glycero-D-manno-heptose 7-phosphate. This is Phosphoheptose isomerase from Glaesserella parasuis serovar 5 (strain SH0165) (Haemophilus parasuis).